The primary structure comprises 529 residues: MTTPSIAIAPSFADEHRRLVAELNNKLAAAALGGNERARKRHVSRGKLLPRERVDRLLDPGSPFLELAPLAAGGMYGDESPGAGIITGIGRVSGRQCVIVANDATVKGGTYYPMTVKKHLRAQEVALQNMLPCIYLVDSGGAFLPRQDEVFPDREHFGRIFYNQATMSAKGIPQVAAVLGSCTAGGAYVPAMSDEAVIVREQGTIFLGGPPLVKAATGEIVSAEELGGGDLHSRTSGVTDHLADDDEDALRIVRAIADTFGPCEPAQWDVRRSVEPKYPQAELYDVVPPDPRVPYDVHEVVVRIVDGSEFSEFKAKYGKTLVTAFARVHGHPVGIVANNGVLFSESALKGAHFIELCDKRKIPLLFLQNIAGFMVGRDYEAGGIAKHGAKMVTAVACARVPKLTVVIGGSYGAGNYSMCGRAYSPRFLWMWPNARISVMGGEQAASVLATVRGEQLSAAGTPWSPDEEEAFKAPIRAQYEDQGNPYYSTARLWDDGIIDPADTRTVVGLALSLCAHAPLDQVGYGVFRM.

Residues 16–272 form the CoA carboxyltransferase N-terminal domain; the sequence is HRRLVAELNN…CEPAQWDVRR (257 aa). Residues 275-521 form the CoA carboxyltransferase C-terminal domain; the sequence is EPKYPQAELY…SLCAHAPLDQ (247 aa).

This sequence belongs to the AccD/PCCB family. As to quaternary structure, the biotin-dependent acyl-CoA carboxylase complex is composed of AccA1, which contains the biotin carboxylase (BC) and biotin carboxyl carrier protein (BCCP) domains, and AccD1, which contains the carboxyl transferase (CT) domain. The AccA1/AccD1 complex forms a dodecamer.

The enzyme catalyses 3-methylbut-2-enoyl-CoA + N(6)-carboxybiotinyl-L-lysyl-[protein] = 3-methyl-(2E)-glutaconyl-CoA + N(6)-biotinyl-L-lysyl-[protein]. It participates in amino-acid degradation; L-leucine degradation. Its function is as follows. Component of a biotin-dependent acyl-CoA carboxylase complex. This subunit transfers the CO2 from carboxybiotin to the CoA ester substrate. When associated with the alpha1 subunit AccA1, is involved in branched amino-acid catabolism with methylcrotonyl coenzyme A as the substrate. Shows residual with propionyl-CoA and acetyl-CoA. The polypeptide is Biotin-dependent 3-methylcrotonyl-coenzyme A carboxylase beta1 subunit (Mycobacterium tuberculosis (strain ATCC 25618 / H37Rv)).